Here is a 736-residue protein sequence, read N- to C-terminus: Serine/threonine-protein kinase BRSK2 (736 aa).

The 252-residue stretch at Tyr-19–Tyr-270 folds into the Protein kinase domain. ATP is bound by residues Leu-25–Val-33 and Lys-48. Asp-141 functions as the Proton acceptor in the catalytic mechanism. Position 174 is a phosphothreonine; by LKB1 (Thr-174). Thr-260 carries the phosphothreonine; by PKA modification. Ser-294 is subject to Phosphoserine. The region spanning Asp-297 to Asp-339 is the UBA domain. Residues Pro-345–Asp-366 are compositionally biased toward basic and acidic residues. Disordered stretches follow at residues Pro-345 to Trp-475 and His-493 to Ser-513. 7 positions are modified to phosphoserine: Ser-367, Ser-382, Ser-393, Ser-412, Ala-416, Ser-423, and Ser-427. Positions Ser-410–Pro-428 are enriched in low complexity. The segment covering Thr-431–Lys-445 has biased composition (pro residues). Position 455 is a phosphoserine (Ser-455). Phosphothreonine is present on residues Thr-459, Thr-463, and Thr-509. A phosphoserine mark is found at Ser-512, Ser-513, and Ser-520. The short motif at Lys-603 to Asn-605 is the KEN box element. The interval Lys-681–Pro-736 is disordered. Residues Gly-699–Gly-708 are compositionally biased toward low complexity.

It belongs to the protein kinase superfamily. CAMK Ser/Thr protein kinase family. SNF1 subfamily. As to quaternary structure, interacts with FZR1, a regulatory subunit of the APC ubiquitin ligase complex. Interacts with COPS5. Interacts with PAK1. Requires Mg(2+) as cofactor. In terms of processing, phosphorylated at Thr-174 by STK11/LKB1 in complex with STE20-related adapter-alpha (STRADA) pseudo kinase and CAB39. Not phosphorylated at Thr-174 by CaMKK2. In contrast, it is phosphorylated and activated by CaMKK1. May be inactivated via dephosphorylation of Thr-174 by PP2C. Phosphorylated at Thr-260 by PKA. Phosphorylation at Thr-260 by PKA was not observed in another study, but this may reflect differences in the experimental approach. Phosphorylation at Thr-260 seems to play a role in the regulation of insulin secretion. Post-translationally, polyubiquitinated by the APC complex in conjunction with FZR1, leading to its proteasomal degradation. Targeted for proteasomal degradation by interaction with COPS5. BRSK2 levels change during the cell cycle. BRSK2 levels are low at the G1/S boundary and gradually increase as cells progress into G2 phase. BRSK2 levels decrease rapidly at the end of mitosis. As to expression, detected in pancreas islets (at protein level).

The protein localises to the cytoplasm. It is found in the cytoskeleton. It localises to the microtubule organizing center. The protein resides in the centrosome. Its subcellular location is the perinuclear region. The protein localises to the endoplasmic reticulum. The enzyme catalyses L-seryl-[protein] + ATP = O-phospho-L-seryl-[protein] + ADP + H(+). It carries out the reaction L-threonyl-[protein] + ATP = O-phospho-L-threonyl-[protein] + ADP + H(+). It catalyses the reaction L-seryl-[tau protein] + ATP = O-phospho-L-seryl-[tau protein] + ADP + H(+). The catalysed reaction is L-threonyl-[tau protein] + ATP = O-phospho-L-threonyl-[tau protein] + ADP + H(+). Its activity is regulated as follows. Activated by phosphorylation on Thr-174 by STK11/LKB1. Functionally, serine/threonine-protein kinase that plays a key role in polarization of neurons and axonogenesis, cell cycle progress and insulin secretion. Phosphorylates CDK16, CDC25C, MAPT/TAU, PAK1 and WEE1. Following phosphorylation and activation by STK11/LKB1, acts as a key regulator of polarization of cortical neurons, probably by mediating phosphorylation of microtubule-associated proteins such as MAPT/TAU at 'Thr-529' and 'Ser-579'. Also regulates neuron polarization by mediating phosphorylation of WEE1 at 'Ser-642' in postmitotic neurons, leading to down-regulate WEE1 activity in polarized neurons. Plays a role in the regulation of the mitotic cell cycle progress and the onset of mitosis. Plays a role in the regulation of insulin secretion in response to elevated glucose levels, probably via phosphorylation of CDK16 and PAK1. While BRSK2 phosphorylated at Thr-174 can inhibit insulin secretion, BRSK2 phosphorylated at Thr-260 can promote insulin secretion. Regulates reorganization of the actin cytoskeleton. May play a role in the apoptotic response triggered by endoplasmic reticulum (ER) stress. This is Serine/threonine-protein kinase BRSK2 (BRSK2) from Homo sapiens (Human).